The primary structure comprises 876 residues: Aspartate--tRNA(Asp/Asn) ligase (876 aa).

Positions 1-278 are unknown; the sequence is MAATDTPWRP…FGFKRAYEGF (278 aa). The interval 279–876 is aspartyl-tRNA synthetase; that stretch reads MHVYRSHTCG…PKPKKEVKEG (598 aa). Glu-453 provides a ligand contact to L-aspartate. Residues 477-480 form an aspartate region; the sequence is QQFK. L-aspartate is bound by residues Arg-499 and His-729. Position 499–501 (499–501) interacts with ATP; the sequence is RDE. An ATP-binding site is contributed by Glu-763. Arg-770 is an L-aspartate binding site. Residue 815 to 818 participates in ATP binding; it reads GVDR.

The protein belongs to the class-II aminoacyl-tRNA synthetase family. Type 1 subfamily. In terms of assembly, homodimer.

It localises to the cytoplasm. The catalysed reaction is tRNA(Asx) + L-aspartate + ATP = L-aspartyl-tRNA(Asx) + AMP + diphosphate. Functionally, aspartyl-tRNA synthetase with relaxed tRNA specificity since it is able to aspartylate not only its cognate tRNA(Asp) but also tRNA(Asn). Reaction proceeds in two steps: L-aspartate is first activated by ATP to form Asp-AMP and then transferred to the acceptor end of tRNA(Asp/Asn). The chain is Aspartate--tRNA(Asp/Asn) ligase (aspS) from Paramagnetospirillum magneticum (strain ATCC 700264 / AMB-1) (Magnetospirillum magneticum).